The following is a 313-amino-acid chain: 18S rRNA aminocarboxypropyltransferase (313 aa).

Residues 1 to 30 are disordered; the sequence is MGKGKNKMHEPKNGRPQRGANGHSSRQNHR. 4 residues coordinate S-adenosyl-L-methionine: Ser-62, Val-110, Leu-133, and Trp-148. The span at 215–228 shows a compositional bias: basic and acidic residues; it reads KETQERKSRAKEED. Residues 215-313 are disordered; sequence KETQERKSRA…SYDPLGNLIR (99 aa). Polar residues predominate over residues 237-246; it reads RRGNGSQSDT. Residues 247–257 are compositionally biased toward acidic residues; it reads SESEENSEQSD. Residues Ser-286 and Ser-289 each carry the phosphoserine modification.

This sequence belongs to the TDD superfamily. TSR3 family.

It is found in the cytoplasm. It localises to the nucleus. It catalyses the reaction an N(1)-methylpseudouridine in rRNA + S-adenosyl-L-methionine = N(1)-methyl-N(3)-[(3S)-3-amino-3-carboxypropyl]pseudouridine in rRNA + S-methyl-5'-thioadenosine + H(+). The catalysed reaction is N(1)-methylpseudouridine(1191) in yeast 18S rRNA + S-adenosyl-L-methionine = N(1)-methyl-N(3)-[(3S)-3-amino-3-carboxypropyl]pseudouridine(1191) in yeast 18S rRNA + S-methyl-5'-thioadenosine + H(+). Its function is as follows. Aminocarboxypropyltransferase that catalyzes the aminocarboxypropyl transfer on pseudouridine at position 1191 (Psi1191) in 18S rRNA. It constitutes the last step in biosynthesis of the hypermodified N1-methyl-N3-(3-amino-3-carboxypropyl) pseudouridine (m1acp3-Psi) conserved in eukaryotic 18S rRNA. Required for processing 35S pre-rRNA at site D. This chain is 18S rRNA aminocarboxypropyltransferase, found in Saccharomyces cerevisiae (strain ATCC 204508 / S288c) (Baker's yeast).